We begin with the raw amino-acid sequence, 217 residues long: Pyridoxine/pyridoxamine 5'-phosphate oxidase (217 aa).

Residues 13-16 (RREY) and Lys-71 each bind substrate. FMN-binding positions include 66–71 (RIVLLK), 81–82 (YT), Arg-87, Lys-88, and Gln-110. Residues Tyr-128, Arg-132, and Ser-136 each contribute to the substrate site. Residues 145–146 (QS) and Trp-190 contribute to the FMN site. 196–198 (RLH) contacts substrate. An FMN-binding site is contributed by Arg-200.

It belongs to the pyridoxamine 5'-phosphate oxidase family. Homodimer. FMN is required as a cofactor.

The catalysed reaction is pyridoxamine 5'-phosphate + O2 + H2O = pyridoxal 5'-phosphate + H2O2 + NH4(+). It catalyses the reaction pyridoxine 5'-phosphate + O2 = pyridoxal 5'-phosphate + H2O2. It participates in cofactor metabolism; pyridoxal 5'-phosphate salvage; pyridoxal 5'-phosphate from pyridoxamine 5'-phosphate: step 1/1. The protein operates within cofactor metabolism; pyridoxal 5'-phosphate salvage; pyridoxal 5'-phosphate from pyridoxine 5'-phosphate: step 1/1. Catalyzes the oxidation of either pyridoxine 5'-phosphate (PNP) or pyridoxamine 5'-phosphate (PMP) into pyridoxal 5'-phosphate (PLP). The protein is Pyridoxine/pyridoxamine 5'-phosphate oxidase of Photorhabdus laumondii subsp. laumondii (strain DSM 15139 / CIP 105565 / TT01) (Photorhabdus luminescens subsp. laumondii).